The sequence spans 343 residues: Glycerol-3-phosphate dehydrogenase [NAD(P)+] (343 aa).

NADPH contacts are provided by S11, W12, H32, R33, and K106. Sn-glycerol 3-phosphate-binding residues include K106, G136, and S138. A140 is a binding site for NADPH. The sn-glycerol 3-phosphate site is built by K192, D245, S255, R256, and N257. K192 serves as the catalytic Proton acceptor. Position 256 (R256) interacts with NADPH. NADPH is bound by residues V280 and E282.

Belongs to the NAD-dependent glycerol-3-phosphate dehydrogenase family.

It is found in the cytoplasm. The catalysed reaction is sn-glycerol 3-phosphate + NAD(+) = dihydroxyacetone phosphate + NADH + H(+). It catalyses the reaction sn-glycerol 3-phosphate + NADP(+) = dihydroxyacetone phosphate + NADPH + H(+). The protein operates within membrane lipid metabolism; glycerophospholipid metabolism. Catalyzes the reduction of the glycolytic intermediate dihydroxyacetone phosphate (DHAP) to sn-glycerol 3-phosphate (G3P), the key precursor for phospholipid synthesis. This chain is Glycerol-3-phosphate dehydrogenase [NAD(P)+], found in Geobacillus thermodenitrificans (strain NG80-2).